Reading from the N-terminus, the 90-residue chain is Co-chaperonin GroES (90 aa).

Belongs to the GroES chaperonin family. In terms of assembly, heptamer of 7 subunits arranged in a ring. Interacts with the chaperonin GroEL.

It is found in the cytoplasm. Together with the chaperonin GroEL, plays an essential role in assisting protein folding. The GroEL-GroES system forms a nano-cage that allows encapsulation of the non-native substrate proteins and provides a physical environment optimized to promote and accelerate protein folding. GroES binds to the apical surface of the GroEL ring, thereby capping the opening of the GroEL channel. The protein is Co-chaperonin GroES of Thermosipho melanesiensis (strain DSM 12029 / CIP 104789 / BI429).